The chain runs to 154 residues: Ribosomal RNA large subunit methyltransferase H (154 aa).

S-adenosyl-L-methionine-binding positions include G103 and 122 to 127 (FSKLTF).

The protein belongs to the RNA methyltransferase RlmH family. In terms of assembly, homodimer.

Its subcellular location is the cytoplasm. It carries out the reaction pseudouridine(1915) in 23S rRNA + S-adenosyl-L-methionine = N(3)-methylpseudouridine(1915) in 23S rRNA + S-adenosyl-L-homocysteine + H(+). Its function is as follows. Specifically methylates the pseudouridine at position 1915 (m3Psi1915) in 23S rRNA. The polypeptide is Ribosomal RNA large subunit methyltransferase H (Caldicellulosiruptor saccharolyticus (strain ATCC 43494 / DSM 8903 / Tp8T 6331)).